A 967-amino-acid chain; its full sequence is Probable serine/threonine-protein kinase DDB_G0290621 (967 aa).

Disordered regions lie at residues 65-122 (EDSD…KEKE), 215-251 (SSLSSSINNSSNNNSNISSSPLSSSPLTLSSSSSSSS), and 287-326 (QQQLPPPPPSQQQQQQQQQQQQQNNSMLQQSNNNNISPRT). Positions 66–94 (DSDEDDDDEEDEEDEEDSDEEEDDDVVED) are enriched in acidic residues. Basic and acidic residues predominate over residues 95–122 (DNTKDIGKSRDSDKSIKGKEKGKEKEKE). Positions 297 to 326 (QQQQQQQQQQQQQNNSMLQQSNNNNISPRT) are enriched in low complexity. The Protein kinase domain maps to 345-610 (FNDSNKIGEG…EIRSRLSEII (266 aa)). ATP contacts are provided by residues 351–359 (IGEGGQCSI) and lysine 368. Catalysis depends on aspartate 467, which acts as the Proton acceptor. Disordered regions lie at residues 634–667 (DDSLINNNNNNNQNNNNQNNNNNNNNNNNNNNNN), 700–752 (STSN…NNNI), and 862–882 (TSSSSNKNNNNNNNDNNNPSN). Low complexity predominate over residues 639-666 (NNNNNNNQNNNNQNNNNNNNNNNNNNNN). Residues 863-882 (SSSSNKNNNNNNNDNNNPSN) show a composition bias toward low complexity.

It belongs to the protein kinase superfamily. TKL Ser/Thr protein kinase family.

It carries out the reaction L-seryl-[protein] + ATP = O-phospho-L-seryl-[protein] + ADP + H(+). The catalysed reaction is L-threonyl-[protein] + ATP = O-phospho-L-threonyl-[protein] + ADP + H(+). The polypeptide is Probable serine/threonine-protein kinase DDB_G0290621 (Dictyostelium discoideum (Social amoeba)).